Reading from the N-terminus, the 311-residue chain is MSEELTPQQVTRMAKLQKRLRTEVGRAIGDYNMIEEGDRVMCCLSGGKDSYAMLDILLNLQQRAPIKFEIVAVNLDQKQPGFPEDILPAYLDTLGVAYHILEKDTYSIVKDKIPEGKTTCSLCSRLRRGTLYGFAQKIGATKIALGHHRDDIIETMFLNMFFAGKMKAMPPKLLSDDGANMVIRPLAYSREKDIAEYAGLKGFPIIPCNLCGSQENLKRAAVKEMLVQWDRDYPGRIETIFTAMQNTAPSQGVDREQFDFLSLTRDPDAPMRGDVAESDLPAFDFVDVANNGHINLDKAVRIDVVNTYTPD.

The PP-loop motif motif lies at 45-50 (SGGKDS). [4Fe-4S] cluster contacts are provided by Cys-120, Cys-123, and Cys-211.

Belongs to the TtcA family. Homodimer. It depends on Mg(2+) as a cofactor. Requires [4Fe-4S] cluster as cofactor.

The protein localises to the cytoplasm. The catalysed reaction is cytidine(32) in tRNA + S-sulfanyl-L-cysteinyl-[cysteine desulfurase] + AH2 + ATP = 2-thiocytidine(32) in tRNA + L-cysteinyl-[cysteine desulfurase] + A + AMP + diphosphate + H(+). Its pathway is tRNA modification. In terms of biological role, catalyzes the ATP-dependent 2-thiolation of cytidine in position 32 of tRNA, to form 2-thiocytidine (s(2)C32). The sulfur atoms are provided by the cysteine/cysteine desulfurase (IscS) system. The chain is tRNA-cytidine(32) 2-sulfurtransferase from Shewanella halifaxensis (strain HAW-EB4).